A 582-amino-acid chain; its full sequence is Beta-glucosidase 28 (582 aa).

Positions 1–21 (MKMHFFILLVITSWLSEKITS) are cleaved as a signal peptide. A beta-D-glucoside-binding positions include Gln48, His151, and 196-197 (NE). Glu197 acts as the Proton donor in catalysis. A disulfide bridge connects residues Cys216 and Cys224. 2 N-linked (GlcNAc...) asparagine glycosylation sites follow: Asn255 and Asn330. Tyr340 contacts a beta-D-glucoside. The N-linked (GlcNAc...) asparagine glycan is linked to Asn370. Glu412 serves as a coordination point for a beta-D-glucoside. Residue Glu412 is the Nucleophile of the active site. The N-linked (GlcNAc...) asparagine glycan is linked to Asn430. Residues Trp462, 469–470 (EW), and Phe478 each bind a beta-D-glucoside. 2 N-linked (GlcNAc...) asparagine glycosylation sites follow: Asn521 and Asn544.

The protein belongs to the glycosyl hydrolase 1 family.

It carries out the reaction Hydrolysis of terminal, non-reducing beta-D-glucosyl residues with release of beta-D-glucose.. The protein is Beta-glucosidase 28 of Arabidopsis thaliana (Mouse-ear cress).